The primary structure comprises 194 residues: dITP/XTP pyrophosphatase (194 aa).

Residue 11 to 16 coordinates substrate; it reads SHNAGK. Catalysis depends on Asp-70, which acts as the Proton acceptor. A Mg(2+)-binding site is contributed by Asp-70. Substrate is bound by residues Ser-71, 149-152, Lys-172, and 177-178; these read FGYD and HR.

It belongs to the HAM1 NTPase family. In terms of assembly, homodimer. It depends on Mg(2+) as a cofactor.

The enzyme catalyses XTP + H2O = XMP + diphosphate + H(+). It carries out the reaction dITP + H2O = dIMP + diphosphate + H(+). It catalyses the reaction ITP + H2O = IMP + diphosphate + H(+). Functionally, pyrophosphatase that catalyzes the hydrolysis of nucleoside triphosphates to their monophosphate derivatives, with a high preference for the non-canonical purine nucleotides XTP (xanthosine triphosphate), dITP (deoxyinosine triphosphate) and ITP. Seems to function as a house-cleaning enzyme that removes non-canonical purine nucleotides from the nucleotide pool, thus preventing their incorporation into DNA/RNA and avoiding chromosomal lesions. This chain is dITP/XTP pyrophosphatase, found in Thermosynechococcus vestitus (strain NIES-2133 / IAM M-273 / BP-1).